A 386-amino-acid chain; its full sequence is Patatin-T5 (386 aa).

Residues 1 to 23 form the signal peptide; sequence MATTNSFTILIFMILATTSSTFA. Positions 32–229 constitute a PNPLA domain; it reads LSIDGGGIKG…TVDDPALLSI (198 aa). The GXGXXG motif lies at 36 to 41; it reads GGGIKG. Asn60 carries N-linked (GlcNAc...) asparagine glycosylation. The GXSXG signature appears at 75–79; that stretch reads GTSTG. The active-site Nucleophile is the Ser77. N-linked (GlcNAc...) asparagine glycans are attached at residues Asn90 and Asn202. The active-site Proton acceptor is Asp215. A DGA/G motif is present at residues 215–217; that stretch reads DGA.

Belongs to the patatin family. N-glycosylated. Tuber and stolon.

The protein localises to the vacuole. In terms of biological role, probable lipolytic acyl hydrolase (LAH), an activity which is thought to be involved in the response of tubers to pathogens. This is Patatin-T5 from Solanum tuberosum (Potato).